A 411-amino-acid chain; its full sequence is Lissencephaly-1 homolog (411 aa).

The region spanning 7 to 39 is the LisH domain; that stretch reads QREELNKAIADYLASNGFMEALESFKKETDMPG. Residues 54–80 adopt a coiled-coil conformation; sequence TSVIRLQKKVMDLEGRLAEAEKEYISG. The segment covering 77–89 has biased composition (basic and acidic residues); that stretch reads YISGTPSREKRSP. The disordered stretch occupies residues 77 to 96; that stretch reads YISGTPSREKRSPTEWIPRP. WD repeat units lie at residues 104-145, 146-187, 188-227, 230-269, 272-334, 337-376, and 379-411; these read GHRA…RTIK, GHTD…RTMH, GHDHNVSSVCFLPSGDHVVSCSRDKSIKMWEVATGYCVRT, GHRDWVRMVRVNSDGSLLASCSNDQTVRVWVVGTKECKLE, EHDH…ALFT, GHDNWVRGVKFHPGGKYLLSASDDKTLRVWELAHQRCCKT, and AHSHFCTSLDFHRTAPYVVTGSVDQTVKVWECR.

It belongs to the WD repeat LIS1/nudF family.

It localises to the cytoplasm. The protein localises to the cytoskeleton. Its subcellular location is the microtubule organizing center. It is found in the centrosome. In terms of biological role, positively regulates the activity of the minus-end directed microtubule motor protein dynein. May enhance dynein-mediated microtubule sliding by targeting dynein to the microtubule plus end. Required for several dynein- and microtubule-dependent processes. This is Lissencephaly-1 homolog from Ixodes scapularis (Black-legged tick).